Consider the following 667-residue polypeptide: Long-chain-fatty-acid--CoA ligase ACSBG2 (667 aa).

ATP is bound by residues 227 to 235, 418 to 423, Asp-496, Arg-511, and Arg-624; these read TSGTTGTPK and EIYGMS.

This sequence belongs to the ATP-dependent AMP-binding enzyme family. Bubblegum subfamily. In terms of tissue distribution, testis- and brainstem-specific. Expressed in pubertal and adult testis. Enriched in germ cells and Sertoli cells while present at a lower level in Leydig cells. Present in testicular Sertoli cells and large motoneurons in the medulla oblongata and cervical spinal cord (at protein level).

The protein localises to the cytoplasm. It is found in the membrane. The catalysed reaction is a long-chain fatty acid + ATP + CoA = a long-chain fatty acyl-CoA + AMP + diphosphate. It carries out the reaction (5Z,8Z,11Z,14Z)-eicosatetraenoate + ATP + CoA = (5Z,8Z,11Z,14Z)-eicosatetraenoyl-CoA + AMP + diphosphate. The enzyme catalyses hexadecanoate + ATP + CoA = hexadecanoyl-CoA + AMP + diphosphate. It catalyses the reaction (9Z)-octadecenoate + ATP + CoA = (9Z)-octadecenoyl-CoA + AMP + diphosphate. The catalysed reaction is (9Z,12Z)-octadecadienoate + ATP + CoA = (9Z,12Z)-octadecadienoyl-CoA + AMP + diphosphate. It carries out the reaction tetracosanoate + ATP + CoA = tetracosanoyl-CoA + AMP + diphosphate. Functionally, catalyzes the conversion of fatty acids such as long chain and very long-chain fatty acids to their active form acyl-CoAs for both synthesis of cellular lipids, and degradation via beta-oxidation. Can activate diverse saturated, monosaturated and polyunsaturated fatty acids. Has increased ability to activate oleic and linoleic acid. May play a role in spermatogenesis. This chain is Long-chain-fatty-acid--CoA ligase ACSBG2, found in Mus musculus (Mouse).